Here is a 257-residue protein sequence, read N- to C-terminus: Type III pantothenate kinase (257 aa).

6-13 (DAGNTNIV) lines the ATP pocket. Residues Tyr100 and 107–110 (GADR) contribute to the substrate site. Residue Asp109 is the Proton acceptor of the active site. Asp129 is a K(+) binding site. Residue Thr132 participates in ATP binding. Thr184 is a substrate binding site.

Belongs to the type III pantothenate kinase family. In terms of assembly, homodimer. Requires NH4(+) as cofactor. K(+) is required as a cofactor.

The protein resides in the cytoplasm. The catalysed reaction is (R)-pantothenate + ATP = (R)-4'-phosphopantothenate + ADP + H(+). Its pathway is cofactor biosynthesis; coenzyme A biosynthesis; CoA from (R)-pantothenate: step 1/5. Catalyzes the phosphorylation of pantothenate (Pan), the first step in CoA biosynthesis. This chain is Type III pantothenate kinase, found in Clostridium botulinum (strain Alaska E43 / Type E3).